The primary structure comprises 449 residues: 3-phosphoshikimate 1-carboxyvinyltransferase (449 aa).

Residues 1–23 (MSHSASPKPATARRSEALTGEIR) are disordered. 3-phosphoshikimate-binding residues include K28, S29, and R33. K28 contacts phosphoenolpyruvate. Phosphoenolpyruvate contacts are provided by G100 and R128. 3-phosphoshikimate contacts are provided by S173, Q175, D326, and K353. Position 175 (Q175) interacts with phosphoenolpyruvate. The Proton acceptor role is filled by D326. Phosphoenolpyruvate-binding residues include R357 and R402.

This sequence belongs to the EPSP synthase family. Monomer.

The protein resides in the cytoplasm. The enzyme catalyses 3-phosphoshikimate + phosphoenolpyruvate = 5-O-(1-carboxyvinyl)-3-phosphoshikimate + phosphate. Its pathway is metabolic intermediate biosynthesis; chorismate biosynthesis; chorismate from D-erythrose 4-phosphate and phosphoenolpyruvate: step 6/7. Functionally, catalyzes the transfer of the enolpyruvyl moiety of phosphoenolpyruvate (PEP) to the 5-hydroxyl of shikimate-3-phosphate (S3P) to produce enolpyruvyl shikimate-3-phosphate and inorganic phosphate. The chain is 3-phosphoshikimate 1-carboxyvinyltransferase from Pseudomonas sp. (strain PG2982).